The sequence spans 250 residues: MKIKEKMTDFGFSYVKKSKKNSMIEDIFNNVSYKYDLMNDIMSFGVHRIWKNILVYCNSTNPDQKILDLASGTGDITKRLSKLINKKGFIVSLDINRKMLKICRKKIRNSGTIRNIFYIQANSEYLPFKKNIFDSVIVSFGFRNFTEKKKQLSSIFNVLKPGGKLLILEFSKPLFEFLKKIYDIYSFYCIPKMGNIISGNYYSYKYLVESIKIHPSQKKLNKILSESEFCNSEYINISGGIVAIHRCYKF.

Residues threonine 73, aspartate 94, 122–123 (NS), and serine 139 each bind S-adenosyl-L-methionine.

It belongs to the class I-like SAM-binding methyltransferase superfamily. MenG/UbiE family.

The enzyme catalyses a 2-demethylmenaquinol + S-adenosyl-L-methionine = a menaquinol + S-adenosyl-L-homocysteine + H(+). It carries out the reaction a 2-methoxy-6-(all-trans-polyprenyl)benzene-1,4-diol + S-adenosyl-L-methionine = a 5-methoxy-2-methyl-3-(all-trans-polyprenyl)benzene-1,4-diol + S-adenosyl-L-homocysteine + H(+). Its pathway is quinol/quinone metabolism; menaquinone biosynthesis; menaquinol from 1,4-dihydroxy-2-naphthoate: step 2/2. It participates in cofactor biosynthesis; ubiquinone biosynthesis. Functionally, methyltransferase required for the conversion of demethylmenaquinol (DMKH2) to menaquinol (MKH2) and the conversion of 2-polyprenyl-6-methoxy-1,4-benzoquinol (DDMQH2) to 2-polyprenyl-3-methyl-6-methoxy-1,4-benzoquinol (DMQH2). The protein is Ubiquinone/menaquinone biosynthesis C-methyltransferase UbiE of Wigglesworthia glossinidia brevipalpis.